The sequence spans 136 residues: MSLIKEFKAFASRGNVIDMAVGIIIGAAFGKIVSSFVADIIMPPIGIILGGVNFSDLSIVLQAAQGDAPAVVIAYGKFIQTIIDFTIIAFAIFMGLKAINSLKRKQEEAPKAPPAPTKDQELLSEIRDLLKAQQEK.

The next 2 helical transmembrane spans lie at 9 to 29 (AFAS…GAAF) and 79 to 99 (IQTI…LKAI).

It belongs to the MscL family. In terms of assembly, homopentamer.

The protein resides in the cell inner membrane. Its function is as follows. Channel that opens in response to stretch forces in the membrane lipid bilayer. May participate in the regulation of osmotic pressure changes within the cell. The chain is Large-conductance mechanosensitive channel from Shewanella sp. (strain ANA-3).